Consider the following 229-residue polypeptide: Aquaporin Z (229 aa).

Helical transmembrane passes span 8–28 (FFGTFWLVLGGCGSAVLAAGV) and 33–53 (IGYLGVALAFGLSVLTMAYAI). An NPA 1 motif is present at residues 62–64 (NPA). 3 helical membrane-spanning segments follow: residues 81–101 (LPYVVAQVLGGLAAGGVLYLI), 131–151 (AALVSEVVLTGMFLLIILGAT), and 158–178 (GFAPIAIGLTLTLIHLISIPV). The NPA 2 signature appears at 184 to 186 (NPA). The helical transmembrane segment at 199-219 (AVSQLWLFWVAPILGAVLGAL) threads the bilayer.

This sequence belongs to the MIP/aquaporin (TC 1.A.8) family. Homotetramer.

It localises to the cell inner membrane. It carries out the reaction H2O(in) = H2O(out). Its function is as follows. Channel that permits osmotically driven movement of water in both directions. It is involved in the osmoregulation and in the maintenance of cell turgor during volume expansion in rapidly growing cells. It mediates rapid entry or exit of water in response to abrupt changes in osmolarity. The sequence is that of Aquaporin Z from Pseudomonas aeruginosa (strain ATCC 15692 / DSM 22644 / CIP 104116 / JCM 14847 / LMG 12228 / 1C / PRS 101 / PAO1).